The chain runs to 560 residues: Putative transport protein PBPRA2420 (560 aa).

The next 5 membrane-spanning stretches (helical) occupy residues 5 to 25, 37 to 57, 66 to 86, 91 to 111, and 161 to 181; these read VASL…AVGL, VGNS…GFTF, FMLF…GIFF, HYLL…LAMT, and SLSV…IFLA. RCK C-terminal domains lie at 203–292 and 293–377; these read RGIG…FRNG and KEVF…IGFI. The next 6 membrane-spanning stretches (helical) occupy residues 386 to 406, 409 to 429, 452 to 472, 477 to 497, 506 to 526, and 539 to 559; these read LLAF…TLAF, VAFG…LGFL, LMVF…DSFA, MVLV…YLFG, ALLF…DMIN, and AGTY…IIIM.

It belongs to the AAE transporter (TC 2.A.81) family. YbjL subfamily.

The protein resides in the cell membrane. The polypeptide is Putative transport protein PBPRA2420 (Photobacterium profundum (strain SS9)).